A 185-amino-acid chain; its full sequence is Ribosome-recycling factor (185 aa).

The protein belongs to the RRF family.

The protein resides in the cytoplasm. In terms of biological role, responsible for the release of ribosomes from messenger RNA at the termination of protein biosynthesis. May increase the efficiency of translation by recycling ribosomes from one round of translation to another. The chain is Ribosome-recycling factor from Bacillus cereus (strain ATCC 10987 / NRS 248).